A 492-amino-acid chain; its full sequence is Bifunctional purine biosynthesis protein PurH (492 aa).

In terms of domain architecture, MGS-like spans 1–144 (MKKAILSVSN…KNFKHVTTIV (144 aa)).

Belongs to the PurH family.

It catalyses the reaction (6R)-10-formyltetrahydrofolate + 5-amino-1-(5-phospho-beta-D-ribosyl)imidazole-4-carboxamide = 5-formamido-1-(5-phospho-D-ribosyl)imidazole-4-carboxamide + (6S)-5,6,7,8-tetrahydrofolate. The catalysed reaction is IMP + H2O = 5-formamido-1-(5-phospho-D-ribosyl)imidazole-4-carboxamide. Its pathway is purine metabolism; IMP biosynthesis via de novo pathway; 5-formamido-1-(5-phospho-D-ribosyl)imidazole-4-carboxamide from 5-amino-1-(5-phospho-D-ribosyl)imidazole-4-carboxamide (10-formyl THF route): step 1/1. The protein operates within purine metabolism; IMP biosynthesis via de novo pathway; IMP from 5-formamido-1-(5-phospho-D-ribosyl)imidazole-4-carboxamide: step 1/1. This is Bifunctional purine biosynthesis protein PurH from Staphylococcus epidermidis (strain ATCC 35984 / DSM 28319 / BCRC 17069 / CCUG 31568 / BM 3577 / RP62A).